The following is a 915-amino-acid chain: Probable dipeptidyl-aminopeptidase B (915 aa).

A disordered region spans residues 1–82 (MAPPFTDDPE…GAFLGPPGVP (82 aa)). Topologically, residues 1-94 (MAPPFTDDPE…RQPMDRGFRR (94 aa)) are cytoplasmic. The span at 15 to 32 (STSRLSQDSLSSVSTTSL) shows a compositional bias: low complexity. Basic and acidic residues predominate over residues 36–62 (RIQEEMDRDPSASRSARRDLLPATKDE). A helical; Signal-anchor for type II membrane protein transmembrane segment spans residues 95 to 115 (ILIIIGAVFVGAWLAGLGIFV). Topologically, residues 116-915 (LSGSYKHESD…IDTKKRRHVS (800 aa)) are vacuolar. N-linked (GlcNAc...) asparagine glycosylation is found at asparagine 355 and asparagine 577. Catalysis depends on serine 760, which acts as the Charge relay system. Asparagine 819 carries N-linked (GlcNAc...) asparagine glycosylation. Residues aspartate 837 and histidine 870 each act as charge relay system in the active site.

The protein belongs to the peptidase S9B family.

The protein resides in the vacuole membrane. The catalysed reaction is Release of an N-terminal dipeptide, Xaa-Yaa-|-Zaa-, from a polypeptide, preferentially when Yaa is Pro, provided Zaa is neither Pro nor hydroxyproline.. Type IV dipeptidyl-peptidase which removes N-terminal dipeptides sequentially from polypeptides having unsubstituted N-termini provided that the penultimate residue is proline. This chain is Probable dipeptidyl-aminopeptidase B (DAPB), found in Metarhizium robertsii (strain ARSEF 23 / ATCC MYA-3075) (Metarhizium anisopliae (strain ARSEF 23)).